Here is a 785-residue protein sequence, read N- to C-terminus: MKMAPQNADSESMQVQELPVPLPDPQKPRDPEAETQEETTSEGSIDRIPTRLWVMHGAVMFGREFCYAMETALVTPILLQIGLPEKYYSLTWFLSPVLGLIFTPLIGSASDRCTLSWGRRRPFILALCVGVLIGVALFLNGSAIGLALGDVPSRQPIGIVLTVLGVVVLDFSADATEGPIRAYLLDVVDSEEQDMALNIHAFSAGLGGAIGYVLGGLDWTQTFLGDWFQTQNQVLFFFAAVIFSVSVALHLFSIEEEQYSPQQDRGPEDPTLPGTSVQPGAPAPASRLSSLGGGMQDGSPPFPDEVQSEHELSLDYLDVDIVRSKSDSVLHMADATLDMEPQLLFLHDIEPSIFQDASYPSTPQSTSQELLRAKLPRLSTFLRESTKEDDTLLDNHLNEAKVPNGRGSPPINSLSRSKVDLKPSVTSGSMRRRRHMFHRQASSTFSYYGKIGSHCYRYRRANAVVLIKPSRSMSDLYDLQQRQRSRHRNQSGATASSGDTESEEGETETTVRLLWLSMLKMPKELMWLCLCHLLTWFSVIAEAVFYTDFMGQVIFKGNPQAPSNSTKWHAYNAGVKMGCWGLVIYAATGAICSALLQKYLDNYDLSIRIIYMLGTLGFSVGTAVMAMFPNVYVAMVTISTMGVVSMSISYCPYALLGHYHDIKEYVHHSPGNSKRGFGIDCAILSCQVYISQILVASALGGVVDAVNSIVVIPIVASVGSFLGFLTATFLVIYPEVSEEPKEEQKGLSSGPAGEGEGGAGSEKPTVLKLSRKGGLRGLVETESMV.

Positions 1 to 43 (MKMAPQNADSESMQVQELPVPLPDPQKPRDPEAETQEETTSEG) are disordered. 6 helical membrane passes run 64-84 (EFCY…IGLP), 87-107 (YYSL…PLIG), 124-144 (ILAL…GSAI), 156-176 (PIGI…ADAT), 197-217 (LNIH…LGGL), and 234-254 (VLFF…LFSI). Disordered regions lie at residues 259–309 (YSPQ…VQSE) and 401–430 (KVPN…SGSM). Residues Ser442 and Ser472 each carry the phosphoserine modification. The disordered stretch occupies residues 478–505 (DLQQRQRSRHRNQSGATASSGDTESEEG). Positions 490–499 (QSGATASSGD) are enriched in low complexity. Ser502 carries the post-translational modification Phosphoserine. Transmembrane regions (helical) follow at residues 525–545 (LMWL…EAVF), 577–597 (MGCW…ALLQ), 609–629 (IIYM…AMFP), 631–651 (VYVA…ISYC), 683–703 (ILSC…GGVV), and 709–729 (IVVI…TATF). Residues 741–772 (KEEQKGLSSGPAGEGEGGAGSEKPTVLKLSRK) are disordered. At Ser749 the chain carries Phosphoserine.

Belongs to the glycoside-pentoside-hexuronide (GPH) cation symporter transporter (TC 2.A.2) family. As to expression, ubiquitously expressed.

The protein resides in the membrane. It catalyses the reaction sucrose(out) + H(+)(out) = sucrose(in) + H(+)(in). Functionally, proton-associated sucrose transporter. May be able to transport also glucose and fructose. This Mus musculus (Mouse) protein is Solute carrier family 45 member 4 (Slc45a4).